The following is a 393-amino-acid chain: Epoxyqueuosine reductase (393 aa).

The active-site Proton donor is the Asp-154. The 4Fe-4S ferredoxin-type domain occupies 196–228 (LPLPVDIPVQEGCHSCVACITSCPTGAIVEPYT). Residues Cys-208, Cys-211, Cys-214, Cys-218, Cys-234, Cys-261, Cys-264, and Cys-268 each coordinate [4Fe-4S] cluster.

The protein belongs to the QueG family. In terms of assembly, monomer. It depends on cob(II)alamin as a cofactor. [4Fe-4S] cluster serves as cofactor.

The protein resides in the cytoplasm. The enzyme catalyses epoxyqueuosine(34) in tRNA + AH2 = queuosine(34) in tRNA + A + H2O. The protein operates within tRNA modification; tRNA-queuosine biosynthesis. In terms of biological role, catalyzes the conversion of epoxyqueuosine (oQ) to queuosine (Q), which is a hypermodified base found in the wobble positions of tRNA(Asp), tRNA(Asn), tRNA(His) and tRNA(Tyr). The protein is Epoxyqueuosine reductase of Shewanella oneidensis (strain ATCC 700550 / JCM 31522 / CIP 106686 / LMG 19005 / NCIMB 14063 / MR-1).